A 253-amino-acid chain; its full sequence is 2-dehydro-3-deoxy-D-gluconate 5-dehydrogenase (253 aa).

14–38 (LITGCDTGLGQGMAVGLAEAGCDIV) serves as a coordination point for NAD(+). S145 provides a ligand contact to substrate. The Proton acceptor role is filled by Y158.

It belongs to the short-chain dehydrogenases/reductases (SDR) family.

It catalyses the reaction 2-dehydro-3-deoxy-D-gluconate + NAD(+) = 3-deoxy-D-glycero-2,5-hexodiulosonate + NADH + H(+). It functions in the pathway glycan metabolism; pectin degradation; 2-dehydro-3-deoxy-D-gluconate from pectin: step 5/5. In terms of biological role, catalyzes the reduction of 2,5-diketo-3-deoxygluconate (DKII or 4,6-dihydroxy-2,5-dioxohexanoate) into 2-keto-3-deoxygluconate (KDG or 2-dehydro-3-deoxygluconate) with a concomitant oxidation of NADH. The protein is 2-dehydro-3-deoxy-D-gluconate 5-dehydrogenase (kduD) of Dickeya dadantii (strain 3937) (Erwinia chrysanthemi (strain 3937)).